A 402-amino-acid chain; its full sequence is MTGIIHSLLDTDLYKFTMLQVVLHQFPQTHSLYEFRCRNASTVYPLADIKEDLEAELDALCRLRFTHDELGYLRSLRFIKSDFVDYLELFQLQRRFVEIGTDDKDRLNIRIEGPMIQAMFFEIFILAIVNELYFRRLETPAVIEEGERRLQAKAARLKEIAAAQNPDDPPFLISDFGTRRRYKLAWQEHVIRTLLEAAPSIVRGTSNVFLAKKLGITPIGTMAHEFLQAFQALDVRLRNFQKAALESWVHEYRGDLGVALTDVVGMDAFLRDFDLYFAKLFDGLRHDSGDPYVWGDKAYAHYQKLKIDSRTKMLTFSDGLDIERSWALHQYFKDRFKTGFGIGTNLTNDMGHTPLNIVLKLVECNGQSVAKLSDSPGKTMTNNSTFLAYLRQVFDVPEPETP.

Phosphohistidine; by autocatalysis is present on His-224.

Belongs to the NAPRTase family. Post-translationally, transiently phosphorylated on a His residue during the reaction cycle. Phosphorylation strongly increases the affinity for substrates and increases the rate of nicotinate D-ribonucleotide production. Dephosphorylation regenerates the low-affinity form of the enzyme, leading to product release.

It carries out the reaction nicotinate + 5-phospho-alpha-D-ribose 1-diphosphate + ATP + H2O = nicotinate beta-D-ribonucleotide + ADP + phosphate + diphosphate. Its pathway is cofactor biosynthesis; NAD(+) biosynthesis; nicotinate D-ribonucleotide from nicotinate: step 1/1. Its function is as follows. Catalyzes the synthesis of beta-nicotinate D-ribonucleotide from nicotinate and 5-phospho-D-ribose 1-phosphate at the expense of ATP. This Neisseria meningitidis serogroup C (strain 053442) protein is Nicotinate phosphoribosyltransferase.